The sequence spans 355 residues: Probable butyrate kinase (355 aa).

The protein belongs to the acetokinase family.

It localises to the cytoplasm. It catalyses the reaction butanoate + ATP = butanoyl phosphate + ADP. This Listeria monocytogenes serovar 1/2a (strain ATCC BAA-679 / EGD-e) protein is Probable butyrate kinase.